A 462-amino-acid polypeptide reads, in one-letter code: UDP-N-acetylmuramate--L-alanine ligase (462 aa).

ATP is bound at residue 119 to 125 (GTHGKTT).

This sequence belongs to the MurCDEF family.

The protein resides in the cytoplasm. The enzyme catalyses UDP-N-acetyl-alpha-D-muramate + L-alanine + ATP = UDP-N-acetyl-alpha-D-muramoyl-L-alanine + ADP + phosphate + H(+). The protein operates within cell wall biogenesis; peptidoglycan biosynthesis. Its function is as follows. Cell wall formation. The protein is UDP-N-acetylmuramate--L-alanine ligase of Parabacteroides distasonis (strain ATCC 8503 / DSM 20701 / CIP 104284 / JCM 5825 / NCTC 11152).